The chain runs to 199 residues: Ribonuclease P protein subunit p25 (199 aa).

Basic and acidic residues predominate over residues M1–E11. Disordered stretches follow at residues M1–F28 and L144–A199. The span at Y151–A166 shows a compositional bias: pro residues. Phosphoserine occurs at positions 172 and 182.

Belongs to the histone-like Alba family. Component of nuclear RNase P and RNase MRP ribonucleoproteins. RNase P consists of a catalytic RNA moiety and 10 different protein chains; POP1, POP4, POP5, POP7, RPP14, RPP21, RPP25, RPP30, RPP38 and RPP40. Within the RNase P complex, POP1, POP7 and RPP25 form the 'finger' subcomplex, POP5, RPP14, RPP40 and homodimeric RPP30 form the 'palm' subcomplex, and RPP21, POP4 and RPP38 form the 'wrist' subcomplex. All subunits of the RNase P complex interact with the catalytic RNA. Several subunits of RNase P are also part of the RNase MRP complex. RNase MRP consists of a catalytic RNA moiety and about 8 protein subunits; POP1, POP7, RPP25, RPP30, RPP38, RPP40 and possibly also POP4 and POP5. POP7 forms a heterodimer with RPP25 that binds to the P3 stem loop of the catalytic RNA.

The protein localises to the nucleus. Its subcellular location is the nucleolus. Component of ribonuclease P, a ribonucleoprotein complex that generates mature tRNA molecules by cleaving their 5'-ends. Also a component of the MRP ribonuclease complex, which cleaves pre-rRNA sequences. The sequence is that of Ribonuclease P protein subunit p25 (RPP25) from Homo sapiens (Human).